We begin with the raw amino-acid sequence, 375 residues long: Chaperone protein DnaJ (375 aa).

Positions 5–70 (DYYEILGVSK…QKRAAYDQYG (66 aa)) constitute a J domain. A CR-type zinc finger spans residues 130-208 (GVTKEIRIPT…CHGHGRVEKS (79 aa)). Zn(2+)-binding residues include cysteine 143, cysteine 146, cysteine 160, cysteine 163, cysteine 182, cysteine 185, cysteine 196, and cysteine 199. 4 CXXCXGXG motif repeats span residues 143–150 (CDVCHGSG), 160–167 (CPTCHGSG), 182–189 (CPHCQGRG), and 196–203 (CHKCHGHG).

The protein belongs to the DnaJ family. As to quaternary structure, homodimer. Zn(2+) serves as cofactor.

Its subcellular location is the cytoplasm. Its function is as follows. Participates actively in the response to hyperosmotic and heat shock by preventing the aggregation of stress-denatured proteins and by disaggregating proteins, also in an autonomous, DnaK-independent fashion. Unfolded proteins bind initially to DnaJ; upon interaction with the DnaJ-bound protein, DnaK hydrolyzes its bound ATP, resulting in the formation of a stable complex. GrpE releases ADP from DnaK; ATP binding to DnaK triggers the release of the substrate protein, thus completing the reaction cycle. Several rounds of ATP-dependent interactions between DnaJ, DnaK and GrpE are required for fully efficient folding. Also involved, together with DnaK and GrpE, in the DNA replication of plasmids through activation of initiation proteins. The sequence is that of Chaperone protein DnaJ from Salmonella paratyphi A (strain ATCC 9150 / SARB42).